We begin with the raw amino-acid sequence, 663 residues long: Transmembrane 9 superfamily member 2 (663 aa).

The signal sequence occupies residues 1–28 (MSARLPVLSPPRWPRLLLLSLLLLGAVP). At 29 to 300 (GPRRSGAFYL…LESMPHTHIQ (272 aa)) the chain is on the lumenal side. The helical transmembrane segment at 301–321 (WFSIMNSLVIVLFLSGMVAMI) threads the bilayer. Topologically, residues 322–374 (MLRTLHKDIARYNQMDSTEDAQEEFGWKLVHGDIFRPPRKGMLLSVFLGSGTQ) are cytoplasmic. Residues 375–395 (ILIMTFVTLFFACLGFLSPAN) form a helical membrane-spanning segment. The Lumenal segment spans residues 396–398 (RGA). The helical transmembrane segment at 399–419 (LMTCAVVLWVLLGTPAGYVAA) threads the bilayer. At 420-437 (RFYKSFGGEKWKTNVLLT) the chain is on the cytoplasmic side. Residues 438 to 458 (SFLCPGIVFADFFIMNLILWG) form a helical membrane-spanning segment. The Lumenal segment spans residues 459-466 (EGSSAAIP). A helical membrane pass occupies residues 467–487 (FGTLVAILALWFCISVPLTFI). The Cytoplasmic segment spans residues 488 to 522 (GAYFGFKKNAIEHPVRTNQIPRQIPEQSFYTKPLP). A helical transmembrane segment spans residues 523 to 543 (GIIMGGILPFGCIFIQLFFIL). The Lumenal segment spans residues 544 to 554 (NSIWSHQMYYM). Residues 555–575 (FGFLFLVFIILVITCSEATIL) form a helical membrane-spanning segment. The Cytoplasmic portion of the chain corresponds to 576-591 (LCYFHLCAEDYHWQWR). A helical membrane pass occupies residues 592–612 (SFLTSGFTAVYFLIYAVHYFF). Residues 613-631 (SKLQITGTASTILYFGYTM) are Lumenal-facing. Residues 632–652 (IMVLIFFLFTGTIGFFACFWF) traverse the membrane as a helical segment. At 653 to 663 (VTKIYSVVKVD) the chain is on the cytoplasmic side.

This sequence belongs to the nonaspanin (TM9SF) (TC 9.A.2) family. As to expression, ubiquitously expressed. Especially abundant in pancreas, highly expressed in kidney, lower levels in heart, brain, skeletal muscle and placenta. Lowest expression in lung and liver.

Its subcellular location is the endosome membrane. The protein resides in the golgi outpost. It is found in the cytoplasm. The protein localises to the cytoskeleton. It localises to the microtubule organizing center. In terms of biological role, in the intracellular compartments, may function as a channel or small molecule transporter. The sequence is that of Transmembrane 9 superfamily member 2 (TM9SF2) from Homo sapiens (Human).